Reading from the N-terminus, the 253-residue chain is 5'/3'-nucleotidase SurE (253 aa).

The a divalent metal cation site is built by D8, D9, S39, and N92.

Belongs to the SurE nucleotidase family. The cofactor is a divalent metal cation.

The protein resides in the cytoplasm. The catalysed reaction is a ribonucleoside 5'-phosphate + H2O = a ribonucleoside + phosphate. The enzyme catalyses a ribonucleoside 3'-phosphate + H2O = a ribonucleoside + phosphate. It carries out the reaction [phosphate](n) + H2O = [phosphate](n-1) + phosphate + H(+). Its function is as follows. Nucleotidase with a broad substrate specificity as it can dephosphorylate various ribo- and deoxyribonucleoside 5'-monophosphates and ribonucleoside 3'-monophosphates with highest affinity to 3'-AMP. Also hydrolyzes polyphosphate (exopolyphosphatase activity) with the preference for short-chain-length substrates (P20-25). Might be involved in the regulation of dNTP and NTP pools, and in the turnover of 3'-mononucleotides produced by numerous intracellular RNases (T1, T2, and F) during the degradation of various RNAs. The polypeptide is 5'/3'-nucleotidase SurE (Escherichia coli O17:K52:H18 (strain UMN026 / ExPEC)).